The primary structure comprises 180 residues: 5'(3')-deoxyribonucleotidase (180 aa).

Catalysis depends on D9, which acts as the Nucleophile. Mg(2+) contacts are provided by D9, D11, and D134. D11 (proton donor) is an active-site residue.

It belongs to the 5'(3')-deoxyribonucleotidase family. It depends on Mg(2+) as a cofactor.

Functionally, dephosphorylates nucleoside monophosphates such as the 5' and 2'(3')-phosphates of deoxyribonucleotides in vitro. The chain is 5'(3')-deoxyribonucleotidase from Clostridium acetobutylicum (strain ATCC 824 / DSM 792 / JCM 1419 / IAM 19013 / LMG 5710 / NBRC 13948 / NRRL B-527 / VKM B-1787 / 2291 / W).